The chain runs to 766 residues: U3 small nucleolar RNA-associated protein 14 homolog C (766 aa).

A disordered region spans residues 14 to 42 (HQEELVDLPKNYPLSENEDEGDSDGERKH). Residues Ser-28, Ser-51, Ser-76, and Ser-80 each carry the phosphoserine modification. Lys-121 is covalently cross-linked (Glycyl lysine isopeptide (Lys-Gly) (interchain with G-Cter in SUMO2)). Thr-204 carries the post-translational modification Phosphothreonine. Coiled-coil stretches lie at residues 216–245 (LEEA…KEKK) and 316–346 (LEAR…EEEE). Positions 365-563 (MNVDGPNPWM…EQLINLQNFL (199 aa)) are disordered. Low complexity predominate over residues 396–405 (ELAAHEVSAS). Residues Ser-403 and Ser-405 each carry the phosphoserine modification. Over residues 407 to 434 (AEERPVAEEEILLREFEERQSLRKRSEL) the composition is skewed to basic and acidic residues. A Phosphoserine modification is found at Ser-443. Lys-447 participates in a covalent cross-link: Glycyl lysine isopeptide (Lys-Gly) (interchain with G-Cter in SUMO2). Residue Ser-451 is modified to Phosphoserine. Residues 452–470 (QEVLSELRALSQKLKEKHQ) are a coiled coil. The segment covering 466–475 (KEKHQSRKQK) has biased composition (basic residues). Basic and acidic residues predominate over residues 502 to 527 (RSERVQTLEELEELGKEDCFQNKELP). Lys-517 is covalently cross-linked (Glycyl lysine isopeptide (Lys-Gly) (interchain with G-Cter in SUMO2)). Positions 533-542 (GQQSERTPNN) are enriched in polar residues. Basic and acidic residues predominate over residues 545 to 555 (DAPKEKKEKEQ). At Ser-567 the chain carries Phosphoserine. A Glycyl lysine isopeptide (Lys-Gly) (interchain with G-Cter in SUMO2) cross-link involves residue Lys-732. Residues 734-766 (EDVGYQSSSRSDLPVIQRNPKRITTRHNKEEKL) form a disordered region.

Belongs to the UTP14 family. As to expression, expressed in testis.

It localises to the nucleus. It is found in the nucleolus. Essential for spermatogenesis. May be required specifically for ribosome biogenesis and hence protein synthesis during male meiosis. The polypeptide is U3 small nucleolar RNA-associated protein 14 homolog C (UTP14C) (Homo sapiens (Human)).